The chain runs to 546 residues: MDLQYYKIFKQKTSQGMVGLLRPLKKRGSENVFKLRLNHKSTPSATDYFFVQDEPAFPIFVFKIPKEVNYLLDHEFEVSKNMKQLTTYLPHFNTILEIKRDVKCHVPEKLCPQALDDPFAKYNCTRDVAIVEYIPSKTTLLEYILGTNFTRCTDSLIHQLILALFIAQQQVQFSHYDLHLENVLIRRCFKRTFFWYKFSYEHATFQRLILTNGLFPVIFDYGFAHSTNVEGSSYYNSLFFTNKGYTPMVFDDVVDFKTLLIRMAHLYHCPQKFKTLVASNFLKNPQLPYKVDRETGWIKSSDKSIARIVCTQMEEVLKDHLGAEYESNFIYKELEQIIDLFMVLIKLPLVETEFNVKELEYHVGTFVDEWGKIDAWFSHGFTDDKLNILKKIFTLVNELILEQSERSTKTTRQLVKRFQLAVYEILDQFGEFVHVQQLDYGSLFHSIVQLSEFIEHVAYKELTRHQTDYPSGGVTGWSLFTQIEQCTSSVEPYLFRLDDHIVLFDCIDQATSFFELKDVDIVESLNQCGTISNQIRLLDSLDLVDH.

This sequence belongs to the IIV-6 098R family.

This is an uncharacterized protein from Aedes vexans (Inland floodwater mosquito).